A 582-amino-acid chain; its full sequence is Trans-ocimene synthase, chloroplastic (582 aa).

The transit peptide at 1 to 35 directs the protein to the chloroplast; it reads MSLIIQSLPHWSRIPPRPPQLSQFQNSSRPKPLIQ. (2E)-geranyl diphosphate is bound by residues Arg296, Asp333, Asp337, Arg474, and Asp477. Positions 333 and 337 each coordinate Mg(2+). Residues 333-337 carry the DDXXD motif motif; that stretch reads DDIYD. Mg(2+)-binding residues include Asp477, Thr481, and Glu485.

This sequence belongs to the terpene synthase family. Tpsb subfamily. Monomer. Mg(2+) is required as a cofactor. Mn(2+) serves as cofactor. Expressed in male and female leaves. Barely detectable in fruits and shoots.

It is found in the plastid. It localises to the chloroplast. The enzyme catalyses (2E)-geranyl diphosphate = (E)-beta-ocimene + diphosphate. Its pathway is secondary metabolite biosynthesis; terpenoid biosynthesis. In terms of biological role, monoterpene synthase (TPS) involved in the biosynthesis of monoterpene natural products used by traditional Chinese medicine to treat headache, inflammation and intoxication. Catalyzes the conversion of (2E)-geranyl diphosphate (GPP) into (E)-beta-ocimene. This Litsea cubeba (Aromatic litsea) protein is Trans-ocimene synthase, chloroplastic.